The sequence spans 336 residues: Atypical chemokine receptor 1 (336 aa).

Topologically, residues 1-63 are extracellular; the sequence is MGNCLHQAEL…CNLLDDSSLP (63 aa). N-linked (GlcNAc...) asparagine glycans are attached at residues Asn-16 and Asn-33. 2 disulfides stabilise this stretch: Cys-51/Cys-276 and Cys-129/Cys-195. A helical membrane pass occupies residues 64–84; it reads FFILASVLGILASSTVLFMLF. Residues 85 to 95 are Cytoplasmic-facing; the sequence is RPLFRWQLCPG. The helical transmembrane segment at 96 to 116 threads the bilayer; the sequence is WPVLAQLAVGSALFSIVVPIL. At 117–129 the chain is on the extracellular side; the sequence is APGLGNTRSSALC. A helical membrane pass occupies residues 130 to 153; sequence SLGYCVWYGSAFAQALLLGCHASL. Residues 154 to 166 are Cytoplasmic-facing; it reads GPKLGAGQVPGLT. Residues 167-187 form a helical membrane-spanning segment; sequence LGLTVGLWGAAALLTVPITLA. The Extracellular segment spans residues 188-207; the sequence is SGASDGLCTPIYSTELKALQ. Residues 208–228 form a helical membrane-spanning segment; sequence ATHTVACFAIFVLLPLGLFGA. At 229–244 the chain is on the cytoplasmic side; sequence KGVKKALGMGPGPWMT. The chain crosses the membrane as a helical span at residues 245–265; sequence ILWIWFIFWWPHGVVLGLDFL. Residues 266-287 are Extracellular-facing; it reads VRSKLLLLPTCLAQQVLDLLLN. A helical membrane pass occupies residues 288–308; sequence LAEALTIVHCVATPLLLALFC. At 309–336 the chain is on the cytoplasmic side; sequence HQATRTLLPSLPLPERWSSPVDTLGSKS.

The protein belongs to the G-protein coupled receptor 1 family. Atypical chemokine receptor subfamily.

It is found in the early endosome. The protein localises to the recycling endosome. Its subcellular location is the membrane. In terms of biological role, atypical chemokine receptor that controls chemokine levels and localization via high-affinity chemokine binding that is uncoupled from classic ligand-driven signal transduction cascades, resulting instead in chemokine sequestration, degradation, or transcytosis. Also known as interceptor (internalizing receptor) or chemokine-scavenging receptor or chemokine decoy receptor. Has a promiscuous chemokine-binding profile, interacting with inflammatory chemokines of both the CXC and the CC subfamilies but not with homeostatic chemokines. Acts as a receptor for chemokines including CCL2, CCL5, CCL7, CCL11, CCL13, CCL14, CCL17, CXCL5, CXCL6, IL8/CXCL8, CXCL11, GRO, RANTES, MCP-1 and TARC. May regulate chemokine bioavailability and, consequently, leukocyte recruitment through two distinct mechanisms: when expressed in endothelial cells, it sustains the abluminal to luminal transcytosis of tissue-derived chemokines and their subsequent presentation to circulating leukocytes; when expressed in erythrocytes, serves as blood reservoir of cognate chemokines but also as a chemokine sink, buffering potential surges in plasma chemokine levels. The chain is Atypical chemokine receptor 1 (ACKR1) from Sapajus apella (Brown-capped capuchin).